Reading from the N-terminus, the 363-residue chain is Ribosomal RNA small subunit methyltransferase H (363 aa).

Residues 55 to 57 (GGH), aspartate 75, aspartate 122, and glutamine 129 contribute to the S-adenosyl-L-methionine site.

This sequence belongs to the methyltransferase superfamily. RsmH family.

It localises to the cytoplasm. It carries out the reaction cytidine(1402) in 16S rRNA + S-adenosyl-L-methionine = N(4)-methylcytidine(1402) in 16S rRNA + S-adenosyl-L-homocysteine + H(+). Functionally, specifically methylates the N4 position of cytidine in position 1402 (C1402) of 16S rRNA. This Bordetella petrii (strain ATCC BAA-461 / DSM 12804 / CCUG 43448) protein is Ribosomal RNA small subunit methyltransferase H.